Here is a 968-residue protein sequence, read N- to C-terminus: Glycine dehydrogenase (decarboxylating) (968 aa).

N6-(pyridoxal phosphate)lysine is present on K712.

The protein belongs to the GcvP family. As to quaternary structure, the glycine cleavage system is composed of four proteins: P, T, L and H. Requires pyridoxal 5'-phosphate as cofactor.

It carries out the reaction N(6)-[(R)-lipoyl]-L-lysyl-[glycine-cleavage complex H protein] + glycine + H(+) = N(6)-[(R)-S(8)-aminomethyldihydrolipoyl]-L-lysyl-[glycine-cleavage complex H protein] + CO2. In terms of biological role, the glycine cleavage system catalyzes the degradation of glycine. The P protein binds the alpha-amino group of glycine through its pyridoxal phosphate cofactor; CO(2) is released and the remaining methylamine moiety is then transferred to the lipoamide cofactor of the H protein. This is Glycine dehydrogenase (decarboxylating) from Prochlorococcus marinus (strain NATL1A).